Consider the following 242-residue polypeptide: Small ribosomal subunit protein uS2 (242 aa).

This sequence belongs to the universal ribosomal protein uS2 family.

The chain is Small ribosomal subunit protein uS2 from Shewanella denitrificans (strain OS217 / ATCC BAA-1090 / DSM 15013).